A 399-amino-acid polypeptide reads, in one-letter code: S-adenosylmethionine synthase (399 aa).

Histidine 17 contacts ATP. Aspartate 19 contacts Mg(2+). Residue glutamate 45 coordinates K(+). Positions 58 and 101 each coordinate L-methionine. The segment at 101–111 (QSPDIAQGVDE) is flexible loop. Residues 177–179 (DAK), 244–245 (RF), aspartate 253, 259–260 (RK), alanine 276, and lysine 280 each bind ATP. Aspartate 253 lines the L-methionine pocket. Lysine 284 provides a ligand contact to L-methionine.

It belongs to the AdoMet synthase family. In terms of assembly, homotetramer; dimer of dimers. Mg(2+) is required as a cofactor. Requires K(+) as cofactor.

The protein localises to the cytoplasm. It catalyses the reaction L-methionine + ATP + H2O = S-adenosyl-L-methionine + phosphate + diphosphate. Its pathway is amino-acid biosynthesis; S-adenosyl-L-methionine biosynthesis; S-adenosyl-L-methionine from L-methionine: step 1/1. Catalyzes the formation of S-adenosylmethionine (AdoMet) from methionine and ATP. The overall synthetic reaction is composed of two sequential steps, AdoMet formation and the subsequent tripolyphosphate hydrolysis which occurs prior to release of AdoMet from the enzyme. This chain is S-adenosylmethionine synthase, found in Listeria welshimeri serovar 6b (strain ATCC 35897 / DSM 20650 / CCUG 15529 / CIP 8149 / NCTC 11857 / SLCC 5334 / V8).